Here is a 306-residue protein sequence, read N- to C-terminus: Putative type I specificity subunit S.MpnORF285P (306 aa).

The protein belongs to the type-I restriction system S methylase family. The methyltransferase is composed of M and S polypeptides.

Functionally, the specificity (S) subunit of a type I methyltransferase (MTase); this subunit dictates DNA sequence specificity. The single R subunit has multiple frameshifts and is probably not expressed. The polypeptide is Putative type I specificity subunit S.MpnORF285P (Mycoplasma pneumoniae (strain ATCC 29342 / M129 / Subtype 1) (Mycoplasmoides pneumoniae)).